A 411-amino-acid chain; its full sequence is Na(+)-translocating NADH-quinone reductase subunit F (411 aa).

Residues 5–25 traverse the membrane as a helical segment; that stretch reads VILALGIAAFTVIVLVLVAII. Residues 36–130 form the 2Fe-2S ferredoxin-type domain; the sequence is GDITIGINDD…NMEVELPEEI (95 aa). The [2Fe-2S] cluster site is built by Cys73, Cys79, Cys82, and Cys114. One can recognise an FAD-binding FR-type domain in the interval 133–273; it reads VKKWECTVIS…SGPFGEFFAK (141 aa).

Belongs to the NqrF family. As to quaternary structure, composed of six subunits; NqrA, NqrB, NqrC, NqrD, NqrE and NqrF. [2Fe-2S] cluster is required as a cofactor. FAD serves as cofactor.

It is found in the cell inner membrane. The enzyme catalyses a ubiquinone + n Na(+)(in) + NADH + H(+) = a ubiquinol + n Na(+)(out) + NAD(+). Functionally, NQR complex catalyzes the reduction of ubiquinone-1 to ubiquinol by two successive reactions, coupled with the transport of Na(+) ions from the cytoplasm to the periplasm. The first step is catalyzed by NqrF, which accepts electrons from NADH and reduces ubiquinone-1 to ubisemiquinone by a one-electron transfer pathway. This Haemophilus influenzae (strain PittEE) protein is Na(+)-translocating NADH-quinone reductase subunit F.